A 521-amino-acid chain; its full sequence is Cyclic AMP-responsive element-binding protein 3-like protein 2 (521 aa).

Residues 1–378 (MEVLESGEQS…CKLAGTQTGT (378 aa)) are Cytoplasmic-facing. Ser93 bears the Phosphoserine mark. Lys178 is covalently cross-linked (Glycyl lysine isopeptide (Lys-Gly) (interchain with G-Cter in SUMO2)). Phosphoserine is present on Ser191. Residues 196–264 (SVDQLHLPPT…PHKLQGSGPL (69 aa)) are disordered. A compositionally biased stretch (low complexity) spans 208 to 220 (SSHSSDSEGSLSP). The bZIP domain maps to 294-357 (ALKKIRRKIK…RTLLQQLQKL (64 aa)). Residues 296–325 (KKIRRKIKNKISAQESRRKKKEYMDSLEKK) are basic motif. The segment at 336–357 (LRKKVEVLENTNRTLLQQLQKL) is leucine-zipper. A helical; Signal-anchor for type II membrane protein membrane pass occupies residues 379-399 (CLMVVVLCFAVAFGSLFQGYG). Residues 400 to 521 (LYPSATKMAL…ELERRVNATF (122 aa)) are Lumenal-facing. Residues 427 to 430 (RNLL) carry the S1P recognition motif. N-linked (GlcNAc...) asparagine glycosylation is found at Asn505 and Asn518.

It belongs to the bZIP family. ATF subfamily. In terms of assembly, binds DNA as a dimer. In terms of processing, upon ER stress, translocated to the Golgi apparatus, where it is processed by regulated intramembrane proteolysis (RIP) to release the cytosol-facing N-terminal transcription factor domain. The cleavage is performed sequentially by site-1 and site-2 proteases (S1P/MBTPS1 and S2P/MBTPS2). N-glycosylated. Post-translationally, ubiquitinated by HRD1/SYVN1; undergoes 'Lys-48'-linked ubiquitination, followed by rapid proteasomal degradation under normal conditions. Upon ER stress, SYVN1 E3 ubiquitin-protein ligase dissociates from its substrate, ubiquitination does not occur and CREB3L2 is stabilized.

The protein resides in the endoplasmic reticulum membrane. It localises to the nucleus. Its function is as follows. Transcription factor involved in unfolded protein response (UPR). In the absence of endoplasmic reticulum (ER) stress, inserted into ER membranes, with N-terminal DNA-binding and transcription activation domains oriented toward the cytosolic face of the membrane. In response to ER stress, transported to the Golgi, where it is cleaved in a site-specific manner by resident proteases S1P/MBTPS1 and S2P/MBTPS2. The released N-terminal cytosolic domain is translocated to the nucleus to effect transcription of specific target genes. Plays a critical role in chondrogenesis by activating the transcription of SEC23A, which promotes the transport and secretion of cartilage matrix proteins, and possibly that of ER biogenesis-related genes. In a neuroblastoma cell line, protects cells from ER stress-induced death. In vitro activates transcription of target genes via direct binding to the CRE site. This Rattus norvegicus (Rat) protein is Cyclic AMP-responsive element-binding protein 3-like protein 2 (Creb3l2).